A 442-amino-acid polypeptide reads, in one-letter code: Trigger factor (442 aa).

The region spanning 163–248 (NDLVTINYCI…ILNVEEKQEN (86 aa)) is the PPIase FKBP-type domain.

It belongs to the FKBP-type PPIase family. Tig subfamily.

Its subcellular location is the cytoplasm. The enzyme catalyses [protein]-peptidylproline (omega=180) = [protein]-peptidylproline (omega=0). Functionally, involved in protein export. Acts as a chaperone by maintaining the newly synthesized protein in an open conformation. Functions as a peptidyl-prolyl cis-trans isomerase. The polypeptide is Trigger factor (Buchnera aphidicola subsp. Schizaphis graminum (strain Sg)).